We begin with the raw amino-acid sequence, 930 residues long: G patch domain-containing protein TGH (930 aa).

Lys25 participates in a covalent cross-link: Glycyl lysine isopeptide (Lys-Gly) (interchain with G-Cter in ubiquitin). The segment at 76 to 152 (GWAPQSFTSS…PSAIPGPVPD (77 aa)) is disordered. A G-patch domain is found at 159–199 (SESIGVKLLLKMGWRRGHSIKEVRASSDARREARKAFLAFY). The SURP motif repeat unit spans residues 405–447 (LIEGFATFVSRCGKLYEDLSREKNQSNQLFDFLREGNGHDYYA). Disordered stretches follow at residues 478 to 508 (AETR…GSFQ), 687 to 751 (RQVS…NEAA), and 773 to 930 (FEVP…RRRD). The segment covering 489 to 498 (PLQRSLKETD) has biased composition (basic and acidic residues). The segment covering 499 to 508 (TSASSGGSFQ) has biased composition (polar residues). Residues 701-711 (IEEPEVEVEVE) are compositionally biased toward acidic residues. Positions 779 to 808 (EEIKSRSKPEDSSDKRLDRPGLKEKVEEKT) are enriched in basic and acidic residues. A compositionally biased stretch (basic residues) spans 848–857 (RRKRYNKKDR). Over residues 858–877 (HRNDSESDSSSDYHSRDKQG) the composition is skewed to basic and acidic residues. Basic residues predominate over residues 892–908 (RSSHKKHSKHRRTKKSS). Residues 913–923 (SSDEEQKESRR) show a composition bias toward basic and acidic residues.

Expressed in vasculature of cotyledons and leaves, young meristematic tissues, trichomes and pistils.

It is found in the nucleus speckle. It localises to the nucleus. Its subcellular location is the nucleoplasm. Its function is as follows. Functions as a component of microRNA (miRNA) and small interfering RNA (siRNA) biogenesis. May assist DCL1 and DCL4 to efficiently process and/or recruit the precursors of miRNAs and siRNAs. In the miRNA biogenesis pathway, associates with the DCL1 complex that processes primary miRNAs (pri-miRNAs) into miRNAs. Binds pri-miRNAs and precursor miRNAs (pre-miRNAs). Is required for the interaction between pri-miRNAs and DRB1. Required for general proper plant growth and, in particular, initiation of vascular development. Interacts genetically with AMP1, a glutamate carboxypeptidase involved in the regulation of meristem function. The sequence is that of G patch domain-containing protein TGH from Arabidopsis thaliana (Mouse-ear cress).